The following is a 179-amino-acid chain: MQQNIIKVIVGSKNPVKVNAAANAMTLLFPEYQIQTIGMDAPSGVPAQPMTDSDTRQGAINRVNYCQQHAEADYYFAMEGGVDHFEFGPATFAYIAIAHQQRLSIGRGALLPLPRQVYQALEAGEELGHVMDRLFNTVNIKQKGGAIGLLTHGHATRESNYTQALILAMAPFLNPEIYL.

Position 71 (Glu-71) interacts with Mg(2+). 71–72 provides a ligand contact to substrate; that stretch reads EA.

Belongs to the YjjX NTPase family. In terms of assembly, homodimer. The cofactor is Mg(2+). It depends on Mn(2+) as a cofactor.

The catalysed reaction is XTP + H2O = XDP + phosphate + H(+). It carries out the reaction ITP + H2O = IDP + phosphate + H(+). In terms of biological role, phosphatase that hydrolyzes non-canonical purine nucleotides such as XTP and ITP to their respective diphosphate derivatives. Probably excludes non-canonical purines from DNA/RNA precursor pool, thus preventing their incorporation into DNA/RNA and avoiding chromosomal lesions. This is Inosine/xanthosine triphosphatase from Shewanella oneidensis (strain ATCC 700550 / JCM 31522 / CIP 106686 / LMG 19005 / NCIMB 14063 / MR-1).